Reading from the N-terminus, the 131-residue chain is DNA-binding protein inhibitor ID-4 (131 aa).

The bHLH domain occupies 36 to 88 (ARYKMEEEETLCLQYDMNDCYSRLKRLVPTIPPNKKVSKVEILQHVIDYILDL).

In terms of assembly, heterodimer with other HLH proteins. In terms of tissue distribution, during embryonic development, expressed in a number of neural tissues, including Rohon-Beard neurons, olfactory placode, eye primordia, and the trigeminal ganglia. Also expressed in other organs including the pronephros and liver primordium. Pronephric development begins by stage 25 and increases during tailbud stages. Expressed in both the tubules and the duct. As embryogenesis progresses, expressed in the migrating melanocytes and lateral line structures.

Its subcellular location is the nucleus. In terms of biological role, transcriptional regulator (lacking a basic DNA binding domain) which negatively regulates the basic helix-loop-helix (bHLH) transcription factors by forming heterodimers and inhibiting their DNA binding and transcriptional activity. Inhibits the activity of both neurogenic (neurog1/neurogenin, neurod1/neuroD) and myogenic (myod1/myoD) bHLH factors. This is DNA-binding protein inhibitor ID-4 from Xenopus laevis (African clawed frog).